The chain runs to 1060 residues: MRIFSGDNKVVDSLASNPGLMSPSNFGGDFGSRLKVNVTSKKKLNDSSPTSPMESSPVSPELVPILTLLNAHTHRRYHEGVFLILQDLNNNGTHAARKWKDVYGVLLGTQLALWDAKELAEFTDPSCPVSEKKLKEVASKPTYINLTDATLRTLDNSDNIVMECGKNLTNALVVSTTLKNRYFLQFGNKESFNAWNSAIRLCLYECSSLQEAYTGAFISSRGAKLGDIRILLTNRKYDYKDWVSVRFGAGMPWKRCYAVISQSSSKKKGHFGEINLYENDKKVKKNHAMATIVEAKALYAVYPSSPKLIDSSTIIKVVGSVKFEKKESAQEKDVFIMPEKHQAVPSYDTIIRFLIPAMDTFKLYGRPEKLLSSKNDPHSLLFGLPVLPHIYYLEVEDLLPLTNSVSSLHWSNNEWKEHISDILQRKIAQGYCGCNSTSNITSPLPSPFLGSADLFERADGVLSPKLSYGSKSSSNNSSKNSLPKRERVKLSSSSEQDLNNSDSPSIKRKSPPLVISESPHKVHTPTDASFRTRVTEGSPYAKQRHPKPFASSVNDSPSDRAKSRTVPYNNNDRKATTPEKFERGETSCGKNVDESLEKVRNMKLEIPESNFDKFMTDKNLLSVDSKCSNEKKLSVESDLSAIYEKYSNGPFGHTEGLNGSSDETYLRFQRASVHSESNYNSRKSFTPSDFSNGNEEEHAVLQELNSLTQRINELGMESINSNSDSDRINGSYSQVDFGNNNDEDDMNLFDPDFMAQDQLRAEERDYNKDDRTPLAKVPAAFQSTGLGITPDDDIERQYITEHRSRHEVPKRSPEKPSNPLEIGNPYAKPGTRLNTTHTHSKTDRSITPQRGQPVPSGQQISSYVQPANINSPNKMYGANNSAMGSPRNPKTRAPPGPYNQGWNNRPSPSNIYQRPHPSDTQPQAYHLPGNPYSTGNRPNMQAQYHPQQVPMPILQQPNRPYQPYAMNTHMGSPGGYAGAAPPFQPANVNYNTRPQQPWPTPNSPSAHYRPPPNLNQPQNGSAGYYRPPAPQLQNSQARPQKKDGFSQFMPSATTKNPYAQ.

In terms of domain architecture, PH spans 75–204 (RRYHEGVFLI…WNSAIRLCLY (130 aa)). Over residues 465-481 (KLSYGSKSSSNNSSKNS) the composition is skewed to low complexity. Disordered stretches follow at residues 465-589 (KLSY…TSCG), 801-942 (EHRS…NMQA), and 955-1060 (QQPN…PYAQ). Polar residues predominate over residues 490–504 (LSSSSEQDLNNSDSP). Residues Ser491, Ser510, Ser518, Ser538, and Ser556 each carry the phosphoserine modification. Composition is skewed to basic and acidic residues over residues 571 to 589 (NDRK…TSCG) and 801 to 814 (EHRS…RSPE). A compositionally biased stretch (polar residues) spans 845–883 (SITPQRGQPVPSGQQISSYVQPANINSPNKMYGANNSAM). Phosphoserine occurs at positions 871 and 885. Polar residues-rich tracts occupy residues 900 to 923 (QGWN…TQPQ), 931 to 942 (PYSTGNRPNMQA), and 1048 to 1060 (FMPS…PYAQ).

The protein belongs to the CAF120 family. In terms of assembly, subunit of the 1.0 MDa CCR4-NOT core complex that contains CCR4, CAF1, CAF120, NOT1, NOT2, NOT3, NOT4, NOT5, CAF40 and CAF130. In the complex interacts with NOT1. The core complex probably is part of a less characterized 1.9 MDa CCR4-NOT complex.

It is found in the cytoplasm. It localises to the nucleus. The protein resides in the bud neck. Its function is as follows. Acts as a component of the CCR4-NOT core complex, which in the nucleus seems to be a general transcription factor, and in the cytoplasm the major mRNA deadenylase involved in mRNA turnover. The NOT protein subcomplex negatively regulates the basal and activated transcription of many genes. Preferentially affects TC-type TATA element-dependent transcription. Could directly or indirectly inhibit component(s) of the general transcription machinery. In Saccharomyces cerevisiae (strain ATCC 204508 / S288c) (Baker's yeast), this protein is CCR4-NOT transcriptional complex subunit CAF120 (CAF120).